Here is a 216-residue protein sequence, read N- to C-terminus: Large ribosomal subunit protein bL25 (216 aa).

The disordered stretch occupies residues Leu-191–Glu-216. A compositionally biased stretch (acidic residues) spans Glu-195–Ala-204.

This sequence belongs to the bacterial ribosomal protein bL25 family. CTC subfamily. In terms of assembly, part of the 50S ribosomal subunit; part of the 5S rRNA/L5/L18/L25 subcomplex. Contacts the 5S rRNA. Binds to the 5S rRNA independently of L5 and L18.

Its function is as follows. This is one of the proteins that binds to the 5S RNA in the ribosome where it forms part of the central protuberance. This chain is Large ribosomal subunit protein bL25, found in Jannaschia sp. (strain CCS1).